A 460-amino-acid polypeptide reads, in one-letter code: Tyrosine-protein phosphatase non-receptor type 18 (460 aa).

In terms of domain architecture, Tyrosine-protein phosphatase spans 26-291; it reads LAGEFSDIQA…RFLYHTVAQM (266 aa). Residues aspartate 197, 229–235, and glutamine 276 each bind substrate; that span reads CSAGCGR. Catalysis depends on cysteine 229, which acts as the Phosphocysteine intermediate. Residues 361–460 form a disordered region; that stretch reads GAPAGAGSGT…RDPPAEWTRV (100 aa). Gly residues predominate over residues 364 to 378; the sequence is AGAGSGTQTGTGTGT. At tyrosine 389 the chain carries Phosphotyrosine. Threonine 393 is modified (phosphothreonine). The residue at position 426 (tyrosine 426) is a Phosphotyrosine. Residues 449–460 show a composition bias toward basic and acidic residues; it reads GPRDPPAEWTRV.

It belongs to the protein-tyrosine phosphatase family. Non-receptor class 4 subfamily. In terms of assembly, interacts with PSTPIP1. Expressed in brain, colon and several tumor-derived cell lines.

The protein resides in the nucleus. It localises to the cytoplasm. It catalyses the reaction O-phospho-L-tyrosyl-[protein] + H2O = L-tyrosyl-[protein] + phosphate. Functionally, differentially dephosphorylate autophosphorylated tyrosine kinases which are known to be overexpressed in tumor tissues. The chain is Tyrosine-protein phosphatase non-receptor type 18 (PTPN18) from Homo sapiens (Human).